Here is a 204-residue protein sequence, read N- to C-terminus: N-alpha-acetyltransferase 40 (204 aa).

Residues 39 to 202 (EIYHHLEKGL…YYILYTKSRK (164 aa)) enclose the N-acetyltransferase domain. Substrate-binding positions include Tyr-64, 107 to 109 (TVE), and Tyr-118. Acetyl-CoA contacts are provided by residues 120 to 122 (IQL) and 128 to 133 (GRNVGK). Substrate is bound at residue Thr-154. Residue Asn-159 participates in acetyl-CoA binding. Ser-176 serves as a coordination point for substrate.

It belongs to the acetyltransferase family. NAA40 subfamily.

It is found in the cytoplasm. The protein resides in the nucleus. The catalysed reaction is N-terminal L-seryl-[histone H4] + acetyl-CoA = N-terminal N(alpha)-acetyl-L-seryl-[histone H4] + CoA + H(+). The enzyme catalyses N-terminal L-seryl-[histone H2A] + acetyl-CoA = N-terminal N(alpha)-acetyl-L-seryl-[histone H2A] + CoA + H(+). In terms of biological role, N-alpha-acetyltransferase that specifically mediates the acetylation of the N-terminal residues of histones H4 and H2A. The sequence is that of N-alpha-acetyltransferase 40 from Schizosaccharomyces pombe (strain 972 / ATCC 24843) (Fission yeast).